A 563-amino-acid polypeptide reads, in one-letter code: BOS complex subunit NCLN (563 aa).

The N-terminal stretch at 1–42 (MLEEAGEVLENMLKASCLPLGFIVFLPAVLLLVAPPLPAADA) is a signal peptide. The Lumenal segment spans residues 43 to 522 (AHEFTVYRMQ…VMNAYRVKPA (480 aa)). 2 N-linked (GlcNAc...) asparagine glycosylation sites follow: Asn-241 and Asn-428. Residues 523–543 (VFDLLLAVGIAAYLGMAYVAV) traverse the membrane as a helical segment. The Cytoplasmic segment spans residues 544 to 563 (QHFSLLYKTVQRLLVKAKTQ).

The protein belongs to the nicastrin family. Component of the back of Sec61 (BOS) complex, composed of NCLN/Nicalin, NOMO (NOMO1, NOMO2 or NOMO3) and TMEM147. The BOS complex is part of the multi-pass translocon (MPT) complex, composed of three subcomplexes, the GEL complex (composed of RAB5IF/OPTI and TMCO1), the BOS complex (composed of NCLN/Nicalin, NOMO and TMEM147) and the PAT complex (composed of WDR83OS/Asterix and CCDC47). The MPT complex associates with the SEC61 complex. In terms of tissue distribution, highly expressed in pancreas and skeletal muscle and, at lower levels, in heart.

Its subcellular location is the endoplasmic reticulum membrane. Functionally, component of the multi-pass translocon (MPT) complex that mediates insertion of multi-pass membrane proteins into the lipid bilayer of membranes. The MPT complex takes over after the SEC61 complex: following membrane insertion of the first few transmembrane segments of proteins by the SEC61 complex, the MPT complex occludes the lateral gate of the SEC61 complex to promote insertion of subsequent transmembrane regions. May antagonize Nodal signaling and subsequent organization of axial structures during mesodermal patterning, via its interaction with NOMO. This Homo sapiens (Human) protein is BOS complex subunit NCLN.